Here is a 1154-residue protein sequence, read N- to C-terminus: FERM domain-containing protein A (1154 aa).

Disordered stretches follow at residues 122 to 149 (NNNS…SSSS), 432 to 468 (NLSS…NHHN), 715 to 734 (NKNN…SSSS), 771 to 794 (SNSN…TSSS), and 961 to 980 (TNGS…NNGI). FERM domains are found at residues 218–547 (PLHQ…PSIQ) and 666–1103 (REIV…QTKL). Residues 437–447 (GGSGNGSGSGN) show a composition bias toward gly residues. The segment covering 448 to 463 (GSSSSSSNSSSGNNNN) has biased composition (low complexity).

Its function is as follows. Key regulator of adhesion dynamics, it acts as an anti-adhesive. Plays a critical role in the regulation of cell-cell adhesion, multi-cellular development and, in particular, the formation of the organising center known as the tip. Required for turnover of paxillin-adhesion sites during cell migration. Plays a major role in normal cell shape, cell-substrate adhesion and actin cytoskeleton organization. In Dictyostelium discoideum (Social amoeba), this protein is FERM domain-containing protein A (frmA).